A 291-amino-acid chain; its full sequence is 4-hydroxy-tetrahydrodipicolinate synthase (291 aa).

A pyruvate-binding site is contributed by Thr-44. The Proton donor/acceptor role is filled by Tyr-132. The Schiff-base intermediate with substrate role is filled by Lys-160. Ile-202 serves as a coordination point for pyruvate.

It belongs to the DapA family. Homotetramer; dimer of dimers.

It localises to the cytoplasm. The catalysed reaction is L-aspartate 4-semialdehyde + pyruvate = (2S,4S)-4-hydroxy-2,3,4,5-tetrahydrodipicolinate + H2O + H(+). It functions in the pathway amino-acid biosynthesis; L-lysine biosynthesis via DAP pathway; (S)-tetrahydrodipicolinate from L-aspartate: step 3/4. Functionally, catalyzes the condensation of (S)-aspartate-beta-semialdehyde [(S)-ASA] and pyruvate to 4-hydroxy-tetrahydrodipicolinate (HTPA). In Rhodospirillum centenum (strain ATCC 51521 / SW), this protein is 4-hydroxy-tetrahydrodipicolinate synthase.